The chain runs to 480 residues: Adenosylmethionine-8-amino-7-oxononanoate aminotransferase (480 aa).

126 to 127 serves as a coordination point for pyridoxal 5'-phosphate; sequence GS. Tyr160 serves as a coordination point for substrate. Asp270 contributes to the pyridoxal 5'-phosphate binding site. Lys314 carries the post-translational modification N6-(pyridoxal phosphate)lysine. Gly350 provides a ligand contact to substrate. 351–352 is a binding site for pyridoxal 5'-phosphate; that stretch reads PT. Residue Arg441 participates in substrate binding.

This sequence belongs to the class-III pyridoxal-phosphate-dependent aminotransferase family. BioA subfamily. Requires pyridoxal 5'-phosphate as cofactor.

The enzyme catalyses (8S)-8-amino-7-oxononanoate + S-adenosyl-L-methionine = S-adenosyl-4-methylsulfanyl-2-oxobutanoate + (7R,8S)-7,8-diammoniononanoate. Its pathway is cofactor biosynthesis; biotin biosynthesis; 7,8-diaminononanoate from 8-amino-7-oxononanoate (SAM route): step 1/1. Its function is as follows. Catalyzes the transfer of the alpha-amino group from S-adenosyl-L-methionine (SAM) to 7-keto-8-aminopelargonic acid (KAPA) to form 7,8-diaminopelargonic acid (DAPA). It is the only aminotransferase known to utilize SAM as an amino donor. This Saccharomyces cerevisiae (strain ATCC 204508 / S288c) (Baker's yeast) protein is Adenosylmethionine-8-amino-7-oxononanoate aminotransferase.